A 447-amino-acid polypeptide reads, in one-letter code: Glutamyl-tRNA(Gln) amidotransferase subunit A (447 aa).

Residues Lys50 and Ser125 each act as charge relay system in the active site. Ser149 (acyl-ester intermediate) is an active-site residue.

It belongs to the amidase family. GatA subfamily. In terms of assembly, heterotrimer of A, B and C subunits.

It catalyses the reaction L-glutamyl-tRNA(Gln) + L-glutamine + ATP + H2O = L-glutaminyl-tRNA(Gln) + L-glutamate + ADP + phosphate + H(+). Functionally, allows the formation of correctly charged Gln-tRNA(Gln) through the transamidation of misacylated Glu-tRNA(Gln) in organisms which lack glutaminyl-tRNA synthetase. The reaction takes place in the presence of glutamine and ATP through an activated gamma-phospho-Glu-tRNA(Gln). The protein is Glutamyl-tRNA(Gln) amidotransferase subunit A of Sulfurimonas denitrificans (strain ATCC 33889 / DSM 1251) (Thiomicrospira denitrificans (strain ATCC 33889 / DSM 1251)).